A 181-amino-acid chain; its full sequence is Ribosome maturation factor RimM (181 aa).

Residues 98–177 (EGEFFYCDLI…KITTHNAKTL (80 aa)) form the PRC barrel domain.

The protein belongs to the RimM family. Binds ribosomal protein uS19.

It is found in the cytoplasm. Functionally, an accessory protein needed during the final step in the assembly of 30S ribosomal subunit, possibly for assembly of the head region. Essential for efficient processing of 16S rRNA. May be needed both before and after RbfA during the maturation of 16S rRNA. It has affinity for free ribosomal 30S subunits but not for 70S ribosomes. This Helicobacter pylori (strain J99 / ATCC 700824) (Campylobacter pylori J99) protein is Ribosome maturation factor RimM.